We begin with the raw amino-acid sequence, 198 residues long: Recombination protein RecR (198 aa).

Residues 58–73 (CSVCNNLTEKDPCDFC) form a C4-type zinc finger. The Toprim domain maps to 81–175 (NLICVVESPK…KVTRIAHGLP (95 aa)).

This sequence belongs to the RecR family.

In terms of biological role, may play a role in DNA repair. It seems to be involved in an RecBC-independent recombinational process of DNA repair. It may act with RecF and RecO. The chain is Recombination protein RecR from Halothermothrix orenii (strain H 168 / OCM 544 / DSM 9562).